Consider the following 174-residue polypeptide: Single-stranded DNA-binding protein 1 (174 aa).

The 106-residue stretch at valine 6–glutamine 111 folds into the SSB domain. A DNA-binding region spans residues tryptophan 55–phenylalanine 61. A disordered region spans residues methionine 110 to phenylalanine 174. A compositionally biased stretch (gly residues) spans glycine 115–glycine 133. Over residues glutamine 134–proline 160 the composition is skewed to low complexity. The Important for interaction with partner proteins signature appears at aspartate 169 to phenylalanine 174.

Homotetramer. Binds PriA via its C-terminus.

Functionally, plays an important role in DNA replication, recombination and repair. Binds to ssDNA and to an array of partner proteins to recruit them to their sites of action during DNA metabolism. Stimulates the ATPase activity of PriA. One tetramer binds to 26 nucleotides (nt) of ssDNA, a 55 nt piece of ssDNA probably binds 2 tetramers. The sequence is that of Single-stranded DNA-binding protein 1 from Klebsiella pneumoniae subsp. pneumoniae (strain ATCC 700721 / MGH 78578).